A 264-amino-acid chain; its full sequence is Anamorsin homolog 2 (264 aa).

The N-terminal SAM-like domain stretch occupies residues 1 to 142 (MAATAAALAV…KVSWSMGSSF (142 aa)). A linker region spans residues 143 to 174 (PLKKATKGLPKIQIDDDSELIDEDSLLTEDDL). [2Fe-2S] cluster-binding residues include Cys-185, Cys-194, Cys-197, and Cys-199. The tract at residues 185-199 (CEVGATRKACKNCTC) is fe-S binding site A. Residues Cys-225, Cys-228, Cys-236, and Cys-239 each contribute to the [4Fe-4S] cluster site. Short sequence motifs (cx2C motif) lie at residues 225–228 (CGNC) and 236–239 (CGTC). Residues 225-239 (CGNCGLGDAFRCGTC) are fe-S binding site B.

This sequence belongs to the anamorsin family. Monomer. [2Fe-2S] cluster is required as a cofactor. It depends on [4Fe-4S] cluster as a cofactor.

The protein resides in the cytoplasm. It localises to the mitochondrion intermembrane space. In terms of biological role, component of the cytosolic iron-sulfur (Fe-S) protein assembly (CIA) machinery. Required for the maturation of extramitochondrial Fe-S proteins. Part of an electron transfer chain functioning in an early step of cytosolic Fe-S biogenesis, facilitating the de novo assembly of a [4Fe-4S] cluster on the cytosolic Fe-S scaffold complex. Electrons are transferred from NADPH via a FAD- and FMN-containing diflavin oxidoreductase. Together with the diflavin oxidoreductase, also required for the assembly of the diferric tyrosyl radical cofactor of ribonucleotide reductase (RNR), probably by providing electrons for reduction during radical cofactor maturation in the catalytic small subunit. This is Anamorsin homolog 2 from Oryza sativa subsp. indica (Rice).